The primary structure comprises 434 residues: Trigger factor (434 aa).

The PPIase FKBP-type domain occupies 161-246 (EDRVTIDFTG…LKKVEERELP (86 aa)).

It belongs to the FKBP-type PPIase family. Tig subfamily.

It is found in the cytoplasm. The catalysed reaction is [protein]-peptidylproline (omega=180) = [protein]-peptidylproline (omega=0). In terms of biological role, involved in protein export. Acts as a chaperone by maintaining the newly synthesized protein in an open conformation. Functions as a peptidyl-prolyl cis-trans isomerase. This is Trigger factor from Pectobacterium carotovorum subsp. carotovorum (strain PC1).